We begin with the raw amino-acid sequence, 710 residues long: Polyribonucleotide nucleotidyltransferase (710 aa).

The Mg(2+) site is built by aspartate 485 and aspartate 491. Residues 552 to 611 (PKILTLTINPDKIRDVIGPSGKVINKIIEETGVKIDIEQDGTVYISSLDTAMNQKAKQII) form the KH domain. One can recognise an S1 motif domain in the interval 621–689 (GETYHGKVKR…NQGRVNLSRK (69 aa)).

This sequence belongs to the polyribonucleotide nucleotidyltransferase family. Requires Mg(2+) as cofactor.

The protein resides in the cytoplasm. The enzyme catalyses RNA(n+1) + phosphate = RNA(n) + a ribonucleoside 5'-diphosphate. Involved in mRNA degradation. Catalyzes the phosphorolysis of single-stranded polyribonucleotides processively in the 3'- to 5'-direction. The protein is Polyribonucleotide nucleotidyltransferase of Shouchella clausii (strain KSM-K16) (Alkalihalobacillus clausii).